Here is a 320-residue protein sequence, read N- to C-terminus: Protease HtpX homolog (320 aa).

Transmembrane regions (helical) follow at residues 6–26 (TAMLLAFMTALFMFVGFLIGG) and 28–48 (AGMMIAFVIAAGMNFFSYWNS). A Zn(2+)-binding site is contributed by H130. E131 is a catalytic residue. Residue H134 participates in Zn(2+) binding. 2 helical membrane-spanning segments follow: residues 145–165 (ITATLAGAISMLGNFAFFFGG) and 173–193 (PLGFVGVLVAMIVAPLAAMLV). E202 provides a ligand contact to Zn(2+). The disordered stretch occupies residues 281–320 (GGMNVSTPPVRAANPSRKSRSVPDTGLGRGGSQPPKGPWS).

This sequence belongs to the peptidase M48B family. Zn(2+) is required as a cofactor.

The protein localises to the cell inner membrane. The sequence is that of Protease HtpX homolog from Rhizobium leguminosarum bv. trifolii (strain WSM2304).